A 201-amino-acid chain; its full sequence is Cytochrome c oxidase assembly protein CtaG (201 aa).

At 1–13 the chain is on the cytoplasmic side; the sequence is MTDQGENEKKQRR. A helical; Signal-anchor for type II membrane protein transmembrane segment spans residues 14-36; the sequence is SNATIAVACLSFFVCMIGAAYAS. Residues 37–201 lie on the Periplasmic side of the membrane; the sequence is VPLYRIFCQV…KAVGSTRNGG (165 aa).

The protein belongs to the COX11/CtaG family.

Its subcellular location is the cell inner membrane. Its function is as follows. Exerts its effect at some terminal stage of cytochrome c oxidase synthesis, probably by being involved in the insertion of the copper B into subunit I. The sequence is that of Cytochrome c oxidase assembly protein CtaG from Brucella suis (strain ATCC 23445 / NCTC 10510).